The chain runs to 91 residues: Acylphosphatase (91 aa).

One can recognise an Acylphosphatase-like domain in the interval 3-89 (TLLVRISGKV…PDQPGFSQKP (87 aa)). Residues R18 and N36 contribute to the active site.

It belongs to the acylphosphatase family.

The catalysed reaction is an acyl phosphate + H2O = a carboxylate + phosphate + H(+). The polypeptide is Acylphosphatase (acyP) (Rhodospirillum rubrum (strain ATCC 11170 / ATH 1.1.1 / DSM 467 / LMG 4362 / NCIMB 8255 / S1)).